A 166-amino-acid chain; its full sequence is Large ribosomal subunit protein uL10 (166 aa).

It belongs to the universal ribosomal protein uL10 family. As to quaternary structure, part of the ribosomal stalk of the 50S ribosomal subunit. The N-terminus interacts with L11 and the large rRNA to form the base of the stalk. The C-terminus forms an elongated spine to which L12 dimers bind in a sequential fashion forming a multimeric L10(L12)X complex.

Forms part of the ribosomal stalk, playing a central role in the interaction of the ribosome with GTP-bound translation factors. In Pseudomonas fluorescens (strain SBW25), this protein is Large ribosomal subunit protein uL10.